Here is a 1237-residue protein sequence, read N- to C-terminus: Anion exchange protein 2 (1237 aa).

The tract at residues 1-238 (MSSAPRRPAS…YNLQERRRIG (238 aa)) is disordered. Residues 1-703 (MSSAPRRPAS…SDFRDALDPQ (703 aa)) are Cytoplasmic-facing. Composition is skewed to basic and acidic residues over residues 38–48 (LRTLGVERFEE) and 57–74 (GGEE…EYHR). Basic residues-rich tracts occupy residues 75-84 (QSSHHIHHPL) and 93-109 (RRRK…RRRP). 6 positions are modified to phosphoserine: S112, S131, S144, S170, S172, and S239. The segment covering 119–132 (TIEEGEEDEEEASE) has biased composition (acidic residues). T253 is modified (phosphothreonine). N6-methyllysine is present on K270. The disordered stretch occupies residues 285–316 (VRKNAKGSTQAAREGREPGPTPRARPRAPHKP). S439 is subject to Phosphoserine. The interval 445–466 (SLLGHHHAQGTESDPHVTEPLI) is disordered. 4 helical membrane-spanning segments follow: residues 704-727 (CLAA…GLLG), 733-770 (LIGV…LLVF), 790-812 (VWIG…SFLV), and 822-843 (IFAF…IKIF). Residues 704-1237 (CLAAVIFIYF…DEYNEMPMPV (534 aa)) form a membrane (anion exchange) region. Topologically, residues 844 to 896 (QEHPLHGCSGSNDSEAGSSSSSNMTWATTILVPDNSSASGQSGQEKPRGQPNT) are extracellular. 3 N-linked (GlcNAc...) asparagine glycosylation sites follow: N855, N866, and N878. Residues 897–914 (ALLSLVLMAGTFFIAFFL) traverse the membrane as a helical segment. Residues 915–929 (RKFKNSRFFPGRIRR) lie on the Cytoplasmic side of the membrane. A run of 5 helical transmembrane segments spans residues 930–950 (VIGD…DYSI), 984–1006 (PFPV…LIFM), 1032–1053 (LLLI…LAAA), 1087–1132 (VTGL…IQFY), and 1159–1195 (MHLF…TVPL). The S-palmitoyl cysteine moiety is linked to residue C1169.

The protein belongs to the anion exchanger (TC 2.A.31) family. As to expression, expressed in the choroid plexus epithelium (at protein level). Expressed in the parotid gland and sublingual salivary gland acinar cells (at protein level). In terms of tissue distribution, widely expressed at similar levels in all tissues examined. Expressed in the testis. Predominantly expressed in stomach although they are also detected at lower levels in other tissues. Expressed in the testis. As to expression, stomach-specific. In terms of tissue distribution, expressed at slightly higher levels in lung and stomach than in other tissues.

It is found in the apical cell membrane. Its subcellular location is the basolateral cell membrane. The catalysed reaction is hydrogencarbonate(in) + chloride(out) = hydrogencarbonate(out) + chloride(in). Inhibited by 4,4'-diisothiocyanatostilbene-2,2'-disulfonic acid (DIDS) and acetazolamide. Muscarinic receptor stimulation enhances activity through a Ca(2+)-dependent mechanism. Its function is as follows. Sodium-independent anion exchanger which mediates the electroneutral exchange of chloride for bicarbonate ions across the cell membrane. Plays an important role in osteoclast differentiation and function. Regulates bone resorption and calpain-dependent actin cytoskeleton organization in osteoclasts via anion exchange-dependent control of pH. Essential for intracellular pH regulation in CD8(+) T-cells upon CD3 stimulation, modulating CD8(+) T-cell responses. In terms of biological role, plays a critical role in male fertility and spermiogenesis. This is Anion exchange protein 2 (Slc4a2) from Mus musculus (Mouse).